Here is a 428-residue protein sequence, read N- to C-terminus: Histidinol dehydrogenase (428 aa).

NAD(+) contacts are provided by Tyr127, Gln189, and Asn212. Residues Ser235, Gln257, and His260 each coordinate substrate. Zn(2+) contacts are provided by Gln257 and His260. Residues Glu325 and His326 each act as proton acceptor in the active site. Residues His326, Asp359, Glu413, and His418 each coordinate substrate. Asp359 provides a ligand contact to Zn(2+). His418 is a binding site for Zn(2+).

This sequence belongs to the histidinol dehydrogenase family. It depends on Zn(2+) as a cofactor.

It carries out the reaction L-histidinol + 2 NAD(+) + H2O = L-histidine + 2 NADH + 3 H(+). The protein operates within amino-acid biosynthesis; L-histidine biosynthesis; L-histidine from 5-phospho-alpha-D-ribose 1-diphosphate: step 9/9. Its function is as follows. Catalyzes the sequential NAD-dependent oxidations of L-histidinol to L-histidinaldehyde and then to L-histidine. The protein is Histidinol dehydrogenase of Prochlorococcus marinus subsp. pastoris (strain CCMP1986 / NIES-2087 / MED4).